Consider the following 558-residue polypeptide: Asparagine--tRNA ligase, cytoplasmic (558 aa).

S71 is subject to Phosphoserine. The interval 79–101 is disordered; it reads MWHREQMKSESREKKEAEDSLRR. Residues 81 to 101 show a composition bias toward basic and acidic residues; it reads HREQMKSESREKKEAEDSLRR. Residues K254 and K500 each carry the N6-acetyllysine modification.

This sequence belongs to the class-II aminoacyl-tRNA synthetase family. As to quaternary structure, homodimer.

It localises to the cytoplasm. The enzyme catalyses tRNA(Asn) + L-asparagine + ATP = L-asparaginyl-tRNA(Asn) + AMP + diphosphate + H(+). Catalyzes the attachment of asparagine to tRNA(Asn) in a two-step reaction: asparagine is first activated by ATP to form Asn-AMP and then transferred to the acceptor end of tRNA(Asn). In addition to its essential role in protein synthesis, acts as a signaling molecule that induced migration of CCR3-expressing cells. Has an essential role in the development of the cerebral cortex, being required for proper proliferation of radial glial cells. This is Asparagine--tRNA ligase, cytoplasmic from Macaca fascicularis (Crab-eating macaque).